The sequence spans 202 residues: D-alanyl-D-alanine dipeptidase (202 aa).

2 residues coordinate Zn(2+): His-116 and Asp-123. Glu-181 acts as the Proton donor/acceptor in catalysis. His-184 provides a ligand contact to Zn(2+).

The protein belongs to the peptidase M15D family. The cofactor is Zn(2+).

It carries out the reaction D-alanyl-D-alanine + H2O = 2 D-alanine. Catalyzes hydrolysis of the D-alanyl-D-alanine dipeptide. The chain is D-alanyl-D-alanine dipeptidase (vanXB) from Enterococcus faecalis (strain ATCC 700802 / V583).